Reading from the N-terminus, the 152-residue chain is Small ribosomal subunit protein uS8m (152 aa).

This sequence belongs to the universal ribosomal protein uS8 family.

It is found in the mitochondrion. In Dictyostelium discoideum (Social amoeba), this protein is Small ribosomal subunit protein uS8m (mrps8).